The sequence spans 236 residues: Ribonuclease HII (236 aa).

The RNase H type-2 domain maps to 27 to 219 (RILCGVDEAG…VRRALDGAPP (193 aa)). Residues Asp33, Glu34, and Asp128 each contribute to the a divalent metal cation site. The interval 212-236 (RALDGAPPPAGDAVPQTDAKTAWAD) is disordered.

The protein belongs to the RNase HII family. It depends on Mn(2+) as a cofactor. The cofactor is Mg(2+).

It localises to the cytoplasm. It carries out the reaction Endonucleolytic cleavage to 5'-phosphomonoester.. Endonuclease that specifically degrades the RNA of RNA-DNA hybrids. This Ralstonia nicotianae (strain ATCC BAA-1114 / GMI1000) (Ralstonia solanacearum) protein is Ribonuclease HII.